We begin with the raw amino-acid sequence, 1028 residues long: Contactin-6 (1028 aa).

The signal sequence occupies residues 1-19 (MRLLWKLVILLPLINSCAG). Ig-like C2-type domains follow at residues 32 to 117 (PQDV…AKLQ), 122 to 208 (EDFE…RSVQ), 227 to 308 (PKIE…RNLA), 318 to 402 (PEWE…AELR), 408 to 495 (PDFS…GSLI), and 499 to 587 (RTVI…ERLS). 6 cysteine pairs are disulfide-bonded: C50–C100, C144–C196, C249–C297, C339–C386, C431–C479, and C521–C577. 2 N-linked (GlcNAc...) asparagine glycosylation sites follow: N65 and N193. Residues N368, N377, and N468 are each glycosylated (N-linked (GlcNAc...) asparagine). Fibronectin type-III domains follow at residues 600–698 (PPED…TKAS), 703–800 (APVN…SGED), 805–901 (APRG…TKKS), and 902–996 (PPSQ…KMSS). N-linked (GlcNAc...) asparagine glycosylation is found at N659, N765, N860, and N865. Position 882 is a phosphotyrosine (Y882). Polar residues predominate over residues 887–902 (TGPSSPPVNVTTKKSP). Residues 887-908 (TGPSSPPVNVTTKKSPPSQPPA) form a disordered region. N895, N931, N956, and N957 each carry an N-linked (GlcNAc...) asparagine glycan. Residue S999 is the site of GPI-anchor amidated serine attachment. The propeptide at 1000-1028 (VGVQILKPSTQFLTMVGFFYCFVIQPLSR) is removed in mature form.

The protein belongs to the immunoglobulin superfamily. Contactin family. Interacts with PTPRG. Specifically expressed in neuronal cells. In brain, it is expressed in spinal cord, cerebrum and cerebellum. At 17 dpc, it is expressed in hippocampus, cerebellum, and the brain stem. Strongly expressed after birth with a maximum level between P1 and P21, which corresponds to the time frame of oligodendrogliogenesis.

It is found in the cell membrane. Its function is as follows. Contactins mediate cell surface interactions during nervous system development. Participates in oligodendrocytes generation by acting as a ligand of NOTCH1. Its association with NOTCH1 promotes NOTCH1 activation through the released notch intracellular domain (NICD) and subsequent translocation to the nucleus. May be involved in motor coordination. This chain is Contactin-6 (Cntn6), found in Rattus norvegicus (Rat).